Reading from the N-terminus, the 434-residue chain is Putative DD-carboxypeptidase TP_0574 (434 aa).

The N-terminal stretch at 1–19 (MKVKYALLSAGALQLLVVG) is a signal peptide. C20 carries N-palmitoyl cysteine lipidation. Residue C20 is the site of S-diacylglycerol cysteine attachment.

In terms of assembly, probably a monomer; a non-lipidated construct (residues 22-434) is monomeric in solution but crystallizes as a homodimer. It depends on Zn(2+) as a cofactor. The N-terminus is blocked. Present as a doublet of low abundance 48 kDa and high abundance 47 kDa proteins. The longer form is probably due to readthrough of the stop codon; the extra amino acids at the C-terminus would be X-Lys-Arg-Gly-Val-Leu-Ser-Arg-Val-Ser, a peptide antibody against this sequence detects only the 48 kDa form.

Its subcellular location is the cell inner membrane. In terms of biological role, a possible D,D-carboxypeptidase, that releases amino acids sequentially from a proteins C-terminus. Has zinc-dependent carboxypeptidase activity on synthetic depsipeptide substrates. May serve to decrease cross-linking of peptidoglycan, promoting the highly sinusous motility of this spirochaete. Overexpression of the whole protein in E.coli leads to aberrant cell morphology and extrusion of the cytoplasm, while overexpression of a construct with the first 62 resides of the protein fused to PhoA does have this effect, suggesting the whole protein, not the lipoprotein moiety, is toxic. Binds penicillin. Penicillin binding is covalent, does not require lipidation, and is zinc-dependent. While this protein has beta-lactamase activity in vitro, that is probably not its role in vivo, as T.pallidum is very sensitive to penicillin antibiotics. Its function is as follows. A pathogen-specific membrane antigen. Most abundant of the membrane lipoproteins, only found in pathogenic treponemes, suggesting that it is an important structural moiety in the cell envelope of virulent treponemal subspecies. A lipopeptide corresponding to the first 6 mature residues induces host (human and mouse) cytokine release by monocyte cell lines via TLR2 and CD14; nonlipidated protein does not stimulate host cells. Stimulates host (human) dendritic cell maturation to become MHC class II-positive antigen presenting cells via TLR2, which depends on lipidation; nonlipidated protein does not stimulate maturation. The sequence is that of Putative DD-carboxypeptidase TP_0574 from Treponema pallidum (strain Nichols).